The chain runs to 301 residues: Protein FAM221A (301 aa).

A disordered region spans residues 235–271; sequence MHAPSTSSPQPLAGGNEVGPSTQLSSLRKPEEDDMAY.

It belongs to the FAM221 family.

The polypeptide is Protein FAM221A (Fam221a) (Mus musculus (Mouse)).